The chain runs to 535 residues: Light-independent protochlorophyllide reductase subunit B (535 aa).

Asp-36 serves as a coordination point for [4Fe-4S] cluster. The active-site Proton donor is the Asp-287. Substrate is bound at residue Gly-422 to Leu-423.

This sequence belongs to the ChlB/BchB/BchZ family. In terms of assembly, protochlorophyllide reductase is composed of three subunits; BchL, BchN and BchB. Forms a heterotetramer of two BchB and two BchN subunits. [4Fe-4S] cluster is required as a cofactor.

It catalyses the reaction chlorophyllide a + oxidized 2[4Fe-4S]-[ferredoxin] + 2 ADP + 2 phosphate = protochlorophyllide a + reduced 2[4Fe-4S]-[ferredoxin] + 2 ATP + 2 H2O. It functions in the pathway porphyrin-containing compound metabolism; bacteriochlorophyll biosynthesis (light-independent). Functionally, component of the dark-operative protochlorophyllide reductase (DPOR) that uses Mg-ATP and reduced ferredoxin to reduce ring D of protochlorophyllide (Pchlide) to form chlorophyllide a (Chlide). This reaction is light-independent. The NB-protein (BchN-BchB) is the catalytic component of the complex. This Rhodopseudomonas palustris (strain BisB5) protein is Light-independent protochlorophyllide reductase subunit B.